Reading from the N-terminus, the 57-residue chain is Dendroaspis polylepis MT9 (57 aa).

Intrachain disulfides connect Cys-3–Cys-22, Cys-17–Cys-36, Cys-38–Cys-49, and Cys-50–Cys-55.

Belongs to the three-finger toxin family. Short-chain subfamily. As to expression, expressed by the venom gland.

Its subcellular location is the secreted. When tested on muscarinic GPCR, specifically antagonizes the type 2 receptor (CHRM2) subtype (Ki/Kd=120-399 nM). Ex vivo, it reverses the M2R-agonist-induced relaxation in rat and human arteries. This Dendroaspis polylepis polylepis (Black mamba) protein is Dendroaspis polylepis MT9.